Here is a 149-residue protein sequence, read N- to C-terminus: Large ribosomal subunit protein bL9 (149 aa).

The protein belongs to the bacterial ribosomal protein bL9 family.

Its function is as follows. Binds to the 23S rRNA. The sequence is that of Large ribosomal subunit protein bL9 from Legionella pneumophila subsp. pneumophila (strain Philadelphia 1 / ATCC 33152 / DSM 7513).